Here is a 156-residue protein sequence, read N- to C-terminus: Ribosomal RNA large subunit methyltransferase H (156 aa).

S-adenosyl-L-methionine-binding positions include leucine 73, glycine 104, and 123–128; that span reads IGPLTL.

It belongs to the RNA methyltransferase RlmH family. In terms of assembly, homodimer.

The protein localises to the cytoplasm. The enzyme catalyses pseudouridine(1915) in 23S rRNA + S-adenosyl-L-methionine = N(3)-methylpseudouridine(1915) in 23S rRNA + S-adenosyl-L-homocysteine + H(+). Its function is as follows. Specifically methylates the pseudouridine at position 1915 (m3Psi1915) in 23S rRNA. This is Ribosomal RNA large subunit methyltransferase H from Stenotrophomonas maltophilia (strain K279a).